Here is a 155-residue protein sequence, read N- to C-terminus: Ribonuclease H (155 aa).

The RNase H type-1 domain maps to 1–142 (MLKQVEIFTD…CDELARAAAM (142 aa)). The Mg(2+) site is built by aspartate 10, glutamate 48, aspartate 70, and aspartate 134.

The protein belongs to the RNase H family. Monomer. It depends on Mg(2+) as a cofactor.

Its subcellular location is the cytoplasm. It catalyses the reaction Endonucleolytic cleavage to 5'-phosphomonoester.. Endonuclease that specifically degrades the RNA of RNA-DNA hybrids. The protein is Ribonuclease H of Escherichia coli (strain 55989 / EAEC).